Reading from the N-terminus, the 324-residue chain is Probable fructokinase-5 (324 aa).

The protein belongs to the carbohydrate kinase PfkB family.

The enzyme catalyses D-fructose + ATP = D-fructose 6-phosphate + ADP + H(+). The protein operates within glycan biosynthesis; starch biosynthesis. Its function is as follows. May play an important role in maintaining the flux of carbon towards starch formation. The protein is Probable fructokinase-5 of Arabidopsis thaliana (Mouse-ear cress).